A 284-amino-acid chain; its full sequence is Tropomyosin (284 aa).

Methionine 1 carries the post-translational modification N-acetylmethionine. The disordered stretch occupies residues 1–42; sequence MDAIKKKMQAMKLEKDNAMDRADTLEQQNKEANNRAEKSEEE. A coiled-coil region spans residues 1-284; that stretch reads MDAIKKKMQA…DQTFSELSGY (284 aa). Residues 12–38 are compositionally biased toward basic and acidic residues; that stretch reads KLEKDNAMDRADTLEQQNKEANNRAEK.

This sequence belongs to the tropomyosin family. In terms of assembly, homodimer.

Functionally, tropomyosin, in association with the troponin complex, plays a central role in the calcium dependent regulation of muscle contraction. This is Tropomyosin from Pandalus borealis (Northern red shrimp).